The sequence spans 330 residues: Aspartate--ammonia ligase (330 aa).

It belongs to the class-II aminoacyl-tRNA synthetase family. AsnA subfamily.

Its subcellular location is the cytoplasm. The catalysed reaction is L-aspartate + NH4(+) + ATP = L-asparagine + AMP + diphosphate + H(+). It functions in the pathway amino-acid biosynthesis; L-asparagine biosynthesis; L-asparagine from L-aspartate (ammonia route): step 1/1. This Klebsiella pneumoniae (strain 342) protein is Aspartate--ammonia ligase.